The sequence spans 172 residues: Mitochondrial import inner membrane translocase subunit Tim17-B (172 aa).

The cysteines at positions 9 and 78 are disulfide-linked. 3 helical membrane-spanning segments follow: residues 17–37 (CGGA…IKGF), 61–77 (QIGG…STID), and 113–133 (VGSA…GILL). The tract at residues 147–172 (FLEDPSQLTPKEGSPAPGYPNYQQYH) is disordered.

It belongs to the Tim17/Tim22/Tim23 family. As to quaternary structure, component of the TIM23 complex at least composed of TIMM23, TIMM17 (TIMM17A or TIMM17B) and TIMM50. The complex interacts with the TIMM44 component of the PAM complex. The complex also interacts with DNAJC15.

Its subcellular location is the mitochondrion inner membrane. Its function is as follows. Essential component of the TIM23 complex, a complex that mediates the translocation of transit peptide-containing proteins across the mitochondrial inner membrane. In Mus musculus (Mouse), this protein is Mitochondrial import inner membrane translocase subunit Tim17-B (Timm17b).